Reading from the N-terminus, the 171-residue chain is 3-hydroxydecanoyl-[acyl-carrier-protein] dehydratase (171 aa).

His70 is an active-site residue.

The protein belongs to the thioester dehydratase family. FabA subfamily. In terms of assembly, homodimer.

It is found in the cytoplasm. It carries out the reaction a (3R)-hydroxyacyl-[ACP] = a (2E)-enoyl-[ACP] + H2O. The enzyme catalyses (3R)-hydroxydecanoyl-[ACP] = (2E)-decenoyl-[ACP] + H2O. The catalysed reaction is (2E)-decenoyl-[ACP] = (3Z)-decenoyl-[ACP]. Its pathway is lipid metabolism; fatty acid biosynthesis. Necessary for the introduction of cis unsaturation into fatty acids. Catalyzes the dehydration of (3R)-3-hydroxydecanoyl-ACP to E-(2)-decenoyl-ACP and then its isomerization to Z-(3)-decenoyl-ACP. Can catalyze the dehydratase reaction for beta-hydroxyacyl-ACPs with saturated chain lengths up to 16:0, being most active on intermediate chain length. In Shewanella pealeana (strain ATCC 700345 / ANG-SQ1), this protein is 3-hydroxydecanoyl-[acyl-carrier-protein] dehydratase.